The primary structure comprises 334 residues: MPGGEGENRVGEGIQSLKQLHALPWDEKTENEMLRSRLDEQSQLICMLKQRADETQIKWQHLERVNGELERQSGEAAQRFQSERERGERLEERFAILASNHQQMIRFKDEYKQQNEELRQLCDTMRESKYPELLHRDRCIQELRDQLGDTETRLKEQEMNYGRKLDTLSAKVEQLEGEKRTGSLELGDLTHRLKVSEETRHEAQEKLARLEEIKKAEKAEADKRLEEIKKEKQELLNLCMERGRTLQDRQREAAELSVRLQEAQKSLEKAEESYQRDKAAVDADIRVSDLQRKLEDGENQFEQLRRDFEAYKKHSGDLLTKERELNSKLRHLIG.

Positions 75-318 (EAAQRFQSER…EAYKKHSGDL (244 aa)) form a coiled coil.

This sequence belongs to the CCDC89 family. As to quaternary structure, interacts (via C-terminus) with hey1/bc8 (via Orange domain). In terms of tissue distribution, in adults, expressed at varying levels in different organs including the liver and brain, with highest expression in the testis.

It localises to the cytoplasm. The protein localises to the nucleus. This Xenopus laevis (African clawed frog) protein is Coiled-coil domain-containing protein 89.